We begin with the raw amino-acid sequence, 481 residues long: Glutamate--tRNA ligase (481 aa).

The 'HIGH' region signature appears at 11-21 (PSPTGLLHIGN). Positions 255–259 (KLSKR) match the 'KMSKS' region motif. Lys258 lines the ATP pocket.

It belongs to the class-I aminoacyl-tRNA synthetase family. Glutamate--tRNA ligase type 1 subfamily. Monomer.

It localises to the cytoplasm. The catalysed reaction is tRNA(Glu) + L-glutamate + ATP = L-glutamyl-tRNA(Glu) + AMP + diphosphate. Its function is as follows. Catalyzes the attachment of glutamate to tRNA(Glu) in a two-step reaction: glutamate is first activated by ATP to form Glu-AMP and then transferred to the acceptor end of tRNA(Glu). The chain is Glutamate--tRNA ligase from Streptococcus pyogenes serotype M6 (strain ATCC BAA-946 / MGAS10394).